The primary structure comprises 2923 residues: Cadherin EGF LAG seven-pass G-type receptor 2 (2923 aa).

Residues 1–31 (MRSPATGVPLPTPPPPLLLLLLLLLPPPLLG) form the signal peptide. At 32 to 2380 (DQVGPCRSLG…GEILPLKTLT (2349 aa)) the chain is on the extracellular side. The disordered stretch occupies residues 154–198 (PGLRAGERSPEESLGGRRKRNVNTAPQFQPPSYQATVPENQPAGT). A compositionally biased stretch (basic and acidic residues) spans 158 to 168 (AGERSPEESLG). Positions 175 to 196 (VNTAPQFQPPSYQATVPENQPA) are enriched in polar residues. 9 Cadherin domains span residues 182–289 (QPPS…DPVF), 290–399 (EQQE…APQF), 400–505 (SEKR…APIF), 506–610 (VSTP…NPTF), 611–712 (TQPE…RPVF), 713–815 (QSSH…APQF), 816–921 (LRDS…PPVF), 922–1023 (EQDE…PPVL), and 1028–1146 (ILFN…SPLL). N-linked (GlcNAc...) asparagine glycosylation is found at N486, N557, and N701. N1036, N1076, N1182, and N1212 each carry an N-linked (GlcNAc...) asparagine glycan. One can recognise an EGF-like 1; calcium-binding domain in the interval 1228 to 1286 (DDNICLREPCENYMRCVSVLRFDSSAPFIASSSVLFRPIHPVGGLRCRCPPGFTGDYCE). Cystine bridges form between C1232–C1243, C1237–C1274, C1276–C1285, C1292–C1303, C1297–C1312, C1314–C1323, C1332–C1343, C1337–C1353, and C1355–C1365. Residues 1288–1324 (EVDLCYSRPCGPHGRCRSREGGYTCLCRDGYTGEHCE) form the EGF-like 2; calcium-binding domain. Positions 1328–1366 (RSGRCTPGVCKNGGTCVNLLVGGFKCDCPSGDFEKPYCQ) constitute an EGF-like 3; calcium-binding domain. Positions 1367–1571 (VTTRSFPAHS…IANNGTVPGC (205 aa)) constitute a Laminin G-like 1 domain. N-linked (GlcNAc...) asparagine glycans are attached at residues N1501 and N1565. 4 disulfide bridges follow: C1545/C1571, C1578/C1589, C1583/C1598, and C1600/C1609. In terms of domain architecture, EGF-like 4; calcium-binding spans 1574–1610 (KKNVCDSNTCHNGGTCVNQWDAFSCECPLGFGGKSCA). Position 1591 is a (3R)-3-hydroxyasparagine (N1591). The Laminin G-like 2 domain maps to 1614 to 1791 (ANPQHFLGSS…GESINVEQGC (178 aa)). A glycan (N-linked (GlcNAc...) asparagine) is linked at N1741. Intrachain disulfides connect C1761-C1791, C1797-C1808, C1802-C1817, C1819-C1828, C1832-C1843, C1837-C1855, C1857-C1866, C1887-C1899, C1889-C1906, C1908-C1921, C1924-C1936, C1926-C1943, C1945-C1954, and C1957-C1969. The 36-residue stretch at 1793–1828 (LPDPCDSNPCPANSYCSNDWDSYSCSCDPGYYGDNC) folds into the EGF-like 5; calcium-binding domain. (3R)-3-hydroxyasparagine is present on N1810. N1827 carries an N-linked (GlcNAc...) asparagine glycan. An EGF-like 6; calcium-binding domain is found at 1829 to 1867 (TNVCDLNPCEHQSVCTRKPSAPHGYTCECPPNYLGPYCE). An EGF-like 7; calcium-binding domain is found at 1883–1922 (TCGPCNCDVSKGFDPDCNKTSGECHCKENHYRPPGSPTCL). N1900 carries N-linked (GlcNAc...) asparagine glycosylation. One can recognise a Laminin EGF-like domain in the interval 1924 to 1971 (CDCYPTGSLSRVCDPEDGQCPCKPGVIGRQCDRCDNPFAEVTTNGCEV). N-linked (GlcNAc...) asparagine glycosylation is found at N2024, N2043, and N2061. One can recognise a GAIN-B domain in the interval 2199-2369 (ETTVILPESV…AVLMDVSRRE (171 aa)). The disordered stretch occupies residues 2213 to 2238 (PPVVRPAGPGEAQEPEELARRQRRHP). 2 disulfide bridges follow: C2319/C2351 and C2339/C2353. Positions 2319 to 2369 (CVFWNHSILVSGTGGWSARGCEVVFRNESHVSCQCNHMTSFAVLMDVSRRE) are GPS. N2323 and N2345 each carry an N-linked (GlcNAc...) asparagine glycan. A helical membrane pass occupies residues 2381-2401 (YVALGVTLAALLLTFFFLTLL). Residues 2402–2416 (RILRSNQHGIRRNLT) lie on the Cytoplasmic side of the membrane. Residues 2417 to 2437 (AALGLAQLVFLLGINQADLPF) traverse the membrane as a helical segment. A topological domain (extracellular) is located at residue A2438. A helical transmembrane segment spans residues 2439-2459 (CTVIAILLHFLYLCTFSWALL). Topologically, residues 2460–2480 (EALHLYRALTEVRDVNTGPMR) are cytoplasmic. A helical transmembrane segment spans residues 2481–2501 (FYYMLGWGVPAFITGLAVGLD). Over 2502-2519 (PEGYGNPDFCWLSIYDTL) the chain is Extracellular. A helical transmembrane segment spans residues 2520-2540 (IWSFAGPVAFAVSMSVFLYIL). Over 2541 to 2560 (AARASCAAQRQGFEKKGPVS) the chain is Cytoplasmic. A helical transmembrane segment spans residues 2561 to 2581 (GLQPSFAVLLLLSATWLLALL). The Extracellular segment spans residues 2582–2591 (SVNSDTLLFH). A helical membrane pass occupies residues 2592 to 2612 (YLFATCNCIQGPFIFLSYVVL). Over 2613–2923 (SKEVRKALKL…SEFLFFNFLH (311 aa)) the chain is Cytoplasmic. Disordered regions lie at residues 2688–2838 (SALN…HKGI) and 2854–2888 (LRLP…RQSL). Composition is skewed to acidic residues over residues 2718 to 2730 (TDSD…EDDQ) and 2742 to 2753 (SEEEEEEEEEEA). Basic and acidic residues predominate over residues 2807 to 2819 (PEERLRENGDALS). A compositionally biased stretch (low complexity) spans 2863-2873 (GSSRGSSASEG).

It belongs to the G-protein coupled receptor 2 family. LN-TM7 subfamily. As to quaternary structure, heterodimer of 2 chains generated by proteolytic processing; the large extracellular N-terminal fragment and the membrane-bound C-terminal fragment predominantly remain associated and non-covalently linked. Post-translationally, the iron and 2-oxoglutarate dependent 3-hydroxylation of aspartate and asparagine is (R) stereospecific within EGF domains. Autoproteolytically processed at the GPS region of the GAIN-B domain; this cleavage modulates receptor activity. In terms of tissue distribution, highest expression in brain and testis.

It localises to the cell membrane. In terms of biological role, receptor that may have an important role in cell/cell signaling during nervous system formation. This is Cadherin EGF LAG seven-pass G-type receptor 2 from Homo sapiens (Human).